The sequence spans 288 residues: Pyridoxal kinase PdxY (288 aa).

Substrate-binding positions include serine 10 and threonine 45–glutamine 46. Residues aspartate 112, alanine 143, glutamate 148, and lysine 181 each contribute to the ATP site. Aspartate 222 serves as a coordination point for substrate.

This sequence belongs to the pyridoxine kinase family. PdxY subfamily. As to quaternary structure, homodimer. It depends on Mg(2+) as a cofactor.

The catalysed reaction is pyridoxal + ATP = pyridoxal 5'-phosphate + ADP + H(+). The protein operates within cofactor metabolism; pyridoxal 5'-phosphate salvage; pyridoxal 5'-phosphate from pyridoxal: step 1/1. Pyridoxal kinase involved in the salvage pathway of pyridoxal 5'-phosphate (PLP). Catalyzes the phosphorylation of pyridoxal to PLP. This chain is Pyridoxal kinase PdxY, found in Paraburkholderia xenovorans (strain LB400).